Reading from the N-terminus, the 234-residue chain is Arsenate respiratory reductase iron-sulfur subunit ArrB (234 aa).

3 4Fe-4S ferredoxin-type domains span residues 3 to 32 (LGMVIDLQKCVGCGGCSLACKTENNTNDGI), 48 to 79 (VKYTYIPTLCNHCDDAPCVKVCPTGAMHKDKR), and 80 to 109 (GLTLQNNDECIGCKKCMNACPYGVISFNAA). Residues C12, C15, C18, C22, C57, C60, C65, C69, C89, C92, C95, C99, C164, C167, C179, and C183 each coordinate [4Fe-4S] cluster.

As to quaternary structure, heterodimer composed of one large subunit (ArrA) and one small subunit (ArrB). Requires [4Fe-4S] cluster as cofactor.

It localises to the periplasm. Phosphate is a competitive inhibitor. In terms of biological role, component of the arsenate respiratory reductase (Arr) complex, which catalyzes the reduction of arsenate (As(V)) to arsenite (As(III)). ArrB is probably the electron transfer subunit. The periplasmic localization of this complex may allow the cell to couple arsenate reduction to energy production before arsenate can be transported to the cell cytoplasm and enter the ars detoxification pathway, an energy-requiring process. The sequence is that of Arsenate respiratory reductase iron-sulfur subunit ArrB from Shewanella sp. (strain ANA-3).